A 102-amino-acid polypeptide reads, in one-letter code: MTLRVVPESLAGASAAIEAVTARLAAAHAAAAPFIAAVIPPGSDSVSVCNAVEFSVHGSQHVAMAAQGVEELGRSGVGVAESGASYAARDALAAASYLSGGL.

The PE domain maps to 3 to 91 (LRVVPESLAG…SGASYAARDA (89 aa)).

The protein belongs to the mycobacterial PE family.

Its subcellular location is the secreted. It localises to the cell envelope. It is found in the cell surface. Its function is as follows. May play a pivotal role in the evasion of host immune response by M.tuberculosis. Mediates production of IL-10 via activation of the p38 and ERK1/2 mitogen-activated protein kinase (MAPK) signaling pathways. The chain is PE family immunomodulator PE15 (PE15) from Mycobacterium tuberculosis (strain CDC 1551 / Oshkosh).